The primary structure comprises 388 residues: Succinate--CoA ligase [ADP-forming] subunit beta (388 aa).

One can recognise an ATP-grasp domain in the interval 9-244 (KQLFAEFGLP…PSQEDEREAH (236 aa)). Residues Lys46, 53–55 (GRG), Glu99, Ser102, and Glu107 each bind ATP. Positions 199 and 213 each coordinate Mg(2+). Substrate-binding positions include Asn264 and 321 to 323 (GIV).

The protein belongs to the succinate/malate CoA ligase beta subunit family. As to quaternary structure, heterotetramer of two alpha and two beta subunits. The cofactor is Mg(2+).

It carries out the reaction succinate + ATP + CoA = succinyl-CoA + ADP + phosphate. The enzyme catalyses GTP + succinate + CoA = succinyl-CoA + GDP + phosphate. It participates in carbohydrate metabolism; tricarboxylic acid cycle; succinate from succinyl-CoA (ligase route): step 1/1. Succinyl-CoA synthetase functions in the citric acid cycle (TCA), coupling the hydrolysis of succinyl-CoA to the synthesis of either ATP or GTP and thus represents the only step of substrate-level phosphorylation in the TCA. The beta subunit provides nucleotide specificity of the enzyme and binds the substrate succinate, while the binding sites for coenzyme A and phosphate are found in the alpha subunit. The polypeptide is Succinate--CoA ligase [ADP-forming] subunit beta (Vibrio campbellii (strain ATCC BAA-1116)).